Reading from the N-terminus, the 469-residue chain is Fe(3+)-Zn(2+) purple acid phosphatase 12 (469 aa).

Positions 1 to 28 (MSSRSDLKIKRVSLIIFLLSVLVEFCYG) are cleaved as a signal peptide. The N-linked (GlcNAc...) asparagine glycan is linked to Asn-114. Asp-168 contributes to the Fe cation binding site. N-linked (GlcNAc...) asparagine glycosylation is present at Asn-176. Fe cation is bound by residues Asp-197 and Tyr-200. Asp-197 lines the Zn(2+) pocket. Asn-234 is a Zn(2+) binding site. Asn-234 is a substrate binding site. The N-linked (GlcNAc...) asparagine glycan is linked to Asn-307. A Zn(2+)-binding site is contributed by His-319. Catalysis depends on His-329, which acts as the Proton donor. Position 356 (His-356) interacts with Zn(2+). Substrate is bound at residue 356-358 (HVH). His-358 serves as a coordination point for Fe cation. The N-linked (GlcNAc...) asparagine glycan is linked to Asn-429.

This sequence belongs to the metallophosphoesterase superfamily. Purple acid phosphatase family. In terms of assembly, homodimer; disulfide-linked. Requires Fe cation as cofactor. The cofactor is Zn(2+). Expressed in roots, stems, leaves, flowers and siliques.

The protein localises to the secreted. It carries out the reaction a phosphate monoester + H2O = an alcohol + phosphate. The protein is Fe(3+)-Zn(2+) purple acid phosphatase 12 (PAP12) of Arabidopsis thaliana (Mouse-ear cress).